Reading from the N-terminus, the 108-residue chain is ATP synthase epsilon chain (108 aa).

Belongs to the ATPase epsilon chain family. As to quaternary structure, F-type ATPases have 2 components, CF(1) - the catalytic core - and CF(0) - the membrane proton channel. CF(1) has five subunits: alpha(3), beta(3), gamma(1), delta(1), epsilon(1). CF(0) has three main subunits: a, b and c.

Its subcellular location is the cell inner membrane. In terms of biological role, produces ATP from ADP in the presence of a proton gradient across the membrane. This chain is ATP synthase epsilon chain, found in Rickettsia bellii (strain OSU 85-389).